A 402-amino-acid polypeptide reads, in one-letter code: UDP-N-acetylmuramoylalanine--D-glutamate ligase (402 aa).

97–103 (GTNGKTT) lines the ATP pocket.

Belongs to the MurCDEF family.

Its subcellular location is the cytoplasm. It catalyses the reaction UDP-N-acetyl-alpha-D-muramoyl-L-alanine + D-glutamate + ATP = UDP-N-acetyl-alpha-D-muramoyl-L-alanyl-D-glutamate + ADP + phosphate + H(+). Its pathway is cell wall biogenesis; peptidoglycan biosynthesis. Functionally, cell wall formation. Catalyzes the addition of glutamate to the nucleotide precursor UDP-N-acetylmuramoyl-L-alanine (UMA). The sequence is that of UDP-N-acetylmuramoylalanine--D-glutamate ligase from Campylobacter jejuni (strain RM1221).